The following is a 74-amino-acid chain: Lambda-hexatoxin-Hv1d (74 aa).

The first 22 residues, 1–22, serve as a signal peptide directing secretion; that stretch reads MNTATCFIVLLVVATVIGGIEA. Positions 23–35 are excised as a propeptide; sequence GESDMRKDVMGLF. 4 disulfides stabilise this stretch: cysteine 40/cysteine 54, cysteine 47/cysteine 59, cysteine 50/cysteine 51, and cysteine 53/cysteine 69.

The protein belongs to the neurotoxin 11 (kappa toxin) family. As to expression, expressed by the venom gland.

Its subcellular location is the secreted. In terms of biological role, this excitatory toxin inhibits insect calcium-activated potassium (KCa) channels (Slo-type). The polypeptide is Lambda-hexatoxin-Hv1d (Hadronyche versuta (Blue mountains funnel-web spider)).